Here is a 248-residue protein sequence, read N- to C-terminus: Probable capsular polysaccharide biosynthesis protein YwqC (248 aa).

2 consecutive transmembrane segments (helical) span residues 18 to 38 (ILLI…ISFF) and 174 to 194 (LLNI…LAFL).

Belongs to the CpsC/CapA family. Post-translationally, not phosphorylated in vitro by YwqD.

Its subcellular location is the cell membrane. It functions in the pathway capsule biogenesis; capsule polysaccharide biosynthesis. Its function is as follows. Required for YwqD kinase activity. May bring YwqD and its substrates into contact. Probably involved in the regulation of capsular polysaccharide biosynthesis. The protein is Probable capsular polysaccharide biosynthesis protein YwqC (ywqC) of Bacillus subtilis (strain 168).